A 277-amino-acid polypeptide reads, in one-letter code: Proteasome subunit beta type-7 (277 aa).

A propeptide spans 1–43 (MAAVSVFQPPVGGFSFDNCRRNAVLEADFAKKGFKLPKARKTG) (removed in mature form). The active-site Nucleophile is the Thr-44.

It belongs to the peptidase T1B family. In terms of assembly, the 26S proteasome consists of a 20S proteasome core and two 19S regulatory subunits. The 20S proteasome core is a barrel-shaped complex made of 28 subunits that are arranged in four stacked rings. The two outer rings are each formed by seven alpha subunits, and the two inner rings are formed by seven beta subunits. The proteolytic activity is exerted by three beta-subunits PSMB5, PSMB6 and PSMB7.

The protein localises to the cytoplasm. Its subcellular location is the nucleus. It carries out the reaction Cleavage of peptide bonds with very broad specificity.. Component of the 20S core proteasome complex involved in the proteolytic degradation of most intracellular proteins. This complex plays numerous essential roles within the cell by associating with different regulatory particles. Associated with two 19S regulatory particles, forms the 26S proteasome and thus participates in the ATP-dependent degradation of ubiquitinated proteins. The 26S proteasome plays a key role in the maintenance of protein homeostasis by removing misfolded or damaged proteins that could impair cellular functions, and by removing proteins whose functions are no longer required. Associated with the PA200 or PA28, the 20S proteasome mediates ubiquitin-independent protein degradation. This type of proteolysis is required in several pathways including spermatogenesis (20S-PA200 complex) or generation of a subset of MHC class I-presented antigenic peptides (20S-PA28 complex). Within the 20S core complex, PSMB7 displays a trypsin-like activity. The protein is Proteasome subunit beta type-7 (Psmb7) of Mus musculus (Mouse).